A 299-amino-acid polypeptide reads, in one-letter code: tRNA dimethylallyltransferase (299 aa).

13–20 (GPTASGKT) is a binding site for ATP. Residue 15–20 (TASGKT) coordinates substrate. The interval 38 to 41 (DSRQ) is interaction with substrate tRNA.

Belongs to the IPP transferase family. Monomer. Requires Mg(2+) as cofactor.

The enzyme catalyses adenosine(37) in tRNA + dimethylallyl diphosphate = N(6)-dimethylallyladenosine(37) in tRNA + diphosphate. Its function is as follows. Catalyzes the transfer of a dimethylallyl group onto the adenine at position 37 in tRNAs that read codons beginning with uridine, leading to the formation of N6-(dimethylallyl)adenosine (i(6)A). The chain is tRNA dimethylallyltransferase from Prochlorococcus marinus (strain SARG / CCMP1375 / SS120).